The sequence spans 232 residues: 2,3,4,5-tetrahydropyridine-2,6-dicarboxylate N-acetyltransferase (232 aa).

The protein belongs to the transferase hexapeptide repeat family. DapH subfamily.

It carries out the reaction (S)-2,3,4,5-tetrahydrodipicolinate + acetyl-CoA + H2O = L-2-acetamido-6-oxoheptanedioate + CoA. Its pathway is amino-acid biosynthesis; L-lysine biosynthesis via DAP pathway; LL-2,6-diaminopimelate from (S)-tetrahydrodipicolinate (acetylase route): step 1/3. Catalyzes the transfer of an acetyl group from acetyl-CoA to tetrahydrodipicolinate. This Kosmotoga olearia (strain ATCC BAA-1733 / DSM 21960 / TBF 19.5.1) protein is 2,3,4,5-tetrahydropyridine-2,6-dicarboxylate N-acetyltransferase.